We begin with the raw amino-acid sequence, 214 residues long: Phosphatidylserine decarboxylase proenzyme (214 aa).

The Schiff-base intermediate with substrate; via pyruvic acid role is filled by serine 182. The residue at position 182 (serine 182) is a Pyruvic acid (Ser); by autocatalysis.

Belongs to the phosphatidylserine decarboxylase family. PSD-A subfamily. As to quaternary structure, heterodimer of a large membrane-associated beta subunit and a small pyruvoyl-containing alpha subunit. The cofactor is pyruvate. In terms of processing, is synthesized initially as an inactive proenzyme. Formation of the active enzyme involves a self-maturation process in which the active site pyruvoyl group is generated from an internal serine residue via an autocatalytic post-translational modification. Two non-identical subunits are generated from the proenzyme in this reaction, and the pyruvate is formed at the N-terminus of the alpha chain, which is derived from the carboxyl end of the proenzyme. The post-translation cleavage follows an unusual pathway, termed non-hydrolytic serinolysis, in which the side chain hydroxyl group of the serine supplies its oxygen atom to form the C-terminus of the beta chain, while the remainder of the serine residue undergoes an oxidative deamination to produce ammonia and the pyruvoyl prosthetic group on the alpha chain.

It is found in the cell membrane. The catalysed reaction is a 1,2-diacyl-sn-glycero-3-phospho-L-serine + H(+) = a 1,2-diacyl-sn-glycero-3-phosphoethanolamine + CO2. It functions in the pathway phospholipid metabolism; phosphatidylethanolamine biosynthesis; phosphatidylethanolamine from CDP-diacylglycerol: step 2/2. Catalyzes the formation of phosphatidylethanolamine (PtdEtn) from phosphatidylserine (PtdSer). This chain is Phosphatidylserine decarboxylase proenzyme, found in Burkholderia cenocepacia (strain HI2424).